Here is a 375-residue protein sequence, read N- to C-terminus: Killer cell immunoglobulin-like receptor 2DL5A (375 aa).

A signal peptide spans 1 to 21; that stretch reads MSLMVISMACVGFFLLQGAWT. Topologically, residues 22–238 are extracellular; sequence HEGGQDKPLL…PSSKTGIRRH (217 aa). Ig-like C2-type domains are found at residues 42 to 102 and 137 to 200; these read GGHV…HPRS and GENV…LHDS. A disulfide bond links C49 and C95. Residues N139, N173, and N218 are each glycosylated (N-linked (GlcNAc...) asparagine). A disulfide bridge connects residues C144 and C193. Residues 213 to 233 are disordered; that stretch reads VSVTGNSSSSSSSPTEPSSKT. The span at 219–231 shows a compositional bias: low complexity; it reads SSSSSSSPTEPSS. The helical transmembrane segment at 239 to 259 threads the bilayer; it reads LHILIGTSVAIILFIILFFFL. Topologically, residues 260–375 are cytoplasmic; the sequence is LHCCCSNKKN…ASSHVPAAGI (116 aa). Positions 334–375 are disordered; it reads AKPRSLSPAHKHHSQALRGSSRETTALSQNRVASSHVPAAGI. Residues 355–366 are compositionally biased toward polar residues; sequence RETTALSQNRVA.

It belongs to the immunoglobulin superfamily.

The protein resides in the cell membrane. In terms of biological role, receptor on natural killer (NK) cells for HLA-C alleles. Inhibits the activity of NK cells thus preventing cell lysis. In Homo sapiens (Human), this protein is Killer cell immunoglobulin-like receptor 2DL5A (KIR2DL5A).